The following is a 281-amino-acid chain: Carbonic anhydrase (281 aa).

Residues Cys-106, His-161, and Cys-164 each contribute to the Zn(2+) site.

Belongs to the beta-class carbonic anhydrase family. Zn(2+) serves as cofactor.

It localises to the cytoplasm. The protein resides in the nucleus. It is found in the mitochondrion intermembrane space. The enzyme catalyses hydrogencarbonate + H(+) = CO2 + H2O. With respect to regulation, amines and amino acids act as activators of catalytic activity, whereas natural product-based phenols, dithiocarbamates, aliphatic and aromatic carboxylates, boronic acids, and sulfonamides act as inhibitors of enzymatic activity. Also inhibited by anions such as cyanide and carbonate, and to a lesser extent by sulfate, phenylboronic, and phenyl arsonic acid. Its function is as follows. Catalyzes the reversible hydration of CO(2) to H(2)CO(3). The main role may be to provide inorganic carbon for the bicarbonate-dependent carboxylation reactions catalyzed by pyruvate carboxylase, acetyl-CoA carboxylase and carbamoyl-phosphate synthetase. Involved in protection against oxidative damage. Acts as a CO(2) chemosensor and induces CO(2)-mediated filamentation. Essential for pathological growth in niches where sufficient CO(2) is not supplied by the host. Necessary for white-to-opaque switching at low CO(2) concentrations. The protein is Carbonic anhydrase (NCE103) of Candida albicans (strain SC5314 / ATCC MYA-2876) (Yeast).